The primary structure comprises 319 residues: Acetyl-coenzyme A carboxylase carboxyl transferase subunit alpha (319 aa).

In terms of domain architecture, CoA carboxyltransferase C-terminal spans 35 to 296; it reads DLDKEIEQLE…KATLVANLAE (262 aa).

The protein belongs to the AccA family. Acetyl-CoA carboxylase is a heterohexamer composed of biotin carboxyl carrier protein (AccB), biotin carboxylase (AccC) and two subunits each of ACCase subunit alpha (AccA) and ACCase subunit beta (AccD).

The protein resides in the cytoplasm. It catalyses the reaction N(6)-carboxybiotinyl-L-lysyl-[protein] + acetyl-CoA = N(6)-biotinyl-L-lysyl-[protein] + malonyl-CoA. Its pathway is lipid metabolism; malonyl-CoA biosynthesis; malonyl-CoA from acetyl-CoA: step 1/1. Functionally, component of the acetyl coenzyme A carboxylase (ACC) complex. First, biotin carboxylase catalyzes the carboxylation of biotin on its carrier protein (BCCP) and then the CO(2) group is transferred by the carboxyltransferase to acetyl-CoA to form malonyl-CoA. This is Acetyl-coenzyme A carboxylase carboxyl transferase subunit alpha from Photobacterium profundum (strain SS9).